A 656-amino-acid chain; its full sequence is Translation factor GUF1 homolog, mitochondrial (656 aa).

A mitochondrion-targeting transit peptide spans 1–29 (MLAVRRRGLRVLAVAPLRVRGLATTSTEF). In terms of domain architecture, tr-type G spans 54–238 (ERIRNFSIVA…AVVERLPPPV (185 aa)). GTP contacts are provided by residues 63–70 (AHIDHGKS), 131–135 (DTPGH), and 185–188 (TKID).

Belongs to the TRAFAC class translation factor GTPase superfamily. Classic translation factor GTPase family. LepA subfamily.

The protein localises to the mitochondrion inner membrane. It catalyses the reaction GTP + H2O = GDP + phosphate + H(+). Functionally, promotes mitochondrial protein synthesis. May act as a fidelity factor of the translation reaction, by catalyzing a one-codon backward translocation of tRNAs on improperly translocated ribosomes. Binds to mitochondrial ribosomes in a GTP-dependent manner. The chain is Translation factor GUF1 homolog, mitochondrial from Phytophthora infestans (strain T30-4) (Potato late blight agent).